Consider the following 305-residue polypeptide: Type II secretion system protein C (305 aa).

Residues 1–29 lie on the Cytoplasmic side of the membrane; it reads MEFKQLPPLAAWPRLLSQNTLRWQKPISE. The helical transmembrane segment at 30–50 threads the bilayer; the sequence is GLTLLLLVASAWTLGKMVWVV. The Periplasmic segment spans residues 51 to 305; that stretch reads SAEQTPVPTW…GQQHDVYIQF (255 aa).

Belongs to the GSP C family.

Its subcellular location is the cell inner membrane. Its function is as follows. Involved in a type II secretion system (T2SS, formerly general secretion pathway, GSP) for the export of proteins. Required for secretion of cholera toxin through the outer membrane. The sequence is that of Type II secretion system protein C (epsC) from Vibrio cholerae serotype O1 (strain ATCC 39315 / El Tor Inaba N16961).